The following is a 327-amino-acid chain: ATP-dependent 6-phosphofructokinase (327 aa).

Gly12 is an ATP binding site. ADP is bound by residues Arg22–Arg26 and Arg55–Asp60. ATP contacts are provided by residues Arg73–Phe74 and Gly103–Ser106. A Mg(2+)-binding site is contributed by Asp104. Thr127–Asp129 is a substrate binding site. Residue Asp129 is the Proton acceptor of the active site. Arg156 provides a ligand contact to ADP. Residues Arg164 and Met171–Arg173 contribute to the substrate site. ADP-binding positions include Gly187–Glu189, Lys213, and Lys215–His217. Residues Glu224, Arg245, and His251 to Arg254 each bind substrate.

The protein belongs to the phosphofructokinase type A (PFKA) family. ATP-dependent PFK group I subfamily. Prokaryotic clade 'B1' sub-subfamily. In terms of assembly, homotetramer. It depends on Mg(2+) as a cofactor.

Its subcellular location is the cytoplasm. It carries out the reaction beta-D-fructose 6-phosphate + ATP = beta-D-fructose 1,6-bisphosphate + ADP + H(+). Its pathway is carbohydrate degradation; glycolysis; D-glyceraldehyde 3-phosphate and glycerone phosphate from D-glucose: step 3/4. Allosterically activated by ADP and other diphosphonucleosides, and allosterically inhibited by phosphoenolpyruvate. In terms of biological role, catalyzes the phosphorylation of D-fructose 6-phosphate to fructose 1,6-bisphosphate by ATP, the first committing step of glycolysis. This is ATP-dependent 6-phosphofructokinase from Yersinia pseudotuberculosis serotype O:1b (strain IP 31758).